Consider the following 480-residue polypeptide: Protein nucleotidyltransferase YdiU (480 aa).

8 residues coordinate ATP: glycine 87, glycine 89, arginine 90, lysine 110, aspartate 122, glycine 123, arginine 173, and arginine 180. Aspartate 249 serves as the catalytic Proton acceptor. Residues asparagine 250 and aspartate 259 each coordinate Mg(2+). Residue aspartate 259 coordinates ATP.

Belongs to the SELO family. Mg(2+) serves as cofactor. Requires Mn(2+) as cofactor.

It catalyses the reaction L-seryl-[protein] + ATP = 3-O-(5'-adenylyl)-L-seryl-[protein] + diphosphate. The enzyme catalyses L-threonyl-[protein] + ATP = 3-O-(5'-adenylyl)-L-threonyl-[protein] + diphosphate. It carries out the reaction L-tyrosyl-[protein] + ATP = O-(5'-adenylyl)-L-tyrosyl-[protein] + diphosphate. The catalysed reaction is L-histidyl-[protein] + UTP = N(tele)-(5'-uridylyl)-L-histidyl-[protein] + diphosphate. It catalyses the reaction L-seryl-[protein] + UTP = O-(5'-uridylyl)-L-seryl-[protein] + diphosphate. The enzyme catalyses L-tyrosyl-[protein] + UTP = O-(5'-uridylyl)-L-tyrosyl-[protein] + diphosphate. Functionally, nucleotidyltransferase involved in the post-translational modification of proteins. It can catalyze the addition of adenosine monophosphate (AMP) or uridine monophosphate (UMP) to a protein, resulting in modifications known as AMPylation and UMPylation. The sequence is that of Protein nucleotidyltransferase YdiU from Anoxybacillus flavithermus (strain DSM 21510 / WK1).